Reading from the N-terminus, the 445-residue chain is UPF0210 protein SPJ_0248 (445 aa).

The protein belongs to the UPF0210 family. Homodimer.

In Streptococcus pneumoniae (strain JJA), this protein is UPF0210 protein SPJ_0248.